The sequence spans 209 residues: Ras-related protein Rab-2-A (209 aa).

A GTP-binding site is contributed by 13-21 (GDTGVGKSC). The Effector region motif lies at 35–43 (HDLTIGVEF). GTP is bound by residues 61–65 (DTAGQ), 119–122 (NKCD), and 149–151 (SAK). Residues Cys207 and Cys208 are each lipidated (S-geranylgeranyl cysteine).

The protein belongs to the small GTPase superfamily. Rab family.

Its subcellular location is the endoplasmic reticulum membrane. It localises to the golgi apparatus membrane. Functionally, protein transport. Probably involved in vesicular traffic. This Zea mays (Maize) protein is Ras-related protein Rab-2-A (RAB2A).